The primary structure comprises 924 residues: Autophagy-related protein 9B (924 aa).

Residues 1 to 144 form a disordered region; sequence MVSRMGWGGR…QDSPGLRVGP (144 aa). At 1 to 207 the chain is on the cytoplasmic side; sequence MVSRMGWGGR…KIYSYHQRNG (207 aa). The span at 17–27 shows a compositional bias: low complexity; that stretch reads WGDLGPGSVPL. The segment covering 28–40 has biased composition (pro residues); it reads LPMPLPPPPPPSC. The segment covering 78–88 has biased composition (polar residues); sequence LQGTGASQSCH. Residues 98 to 113 show a composition bias toward low complexity; the sequence is PTQAQPAMTPASASPS. The Tyrosine-based sorting signal motif lies at 151–154; that stretch reads YERL. Residues 208–228 traverse the membrane as a helical segment; the sequence is FACILLEDVFQLGQFIFIVTF. Residues 229-276 are Lumenal-facing; that stretch reads TTFLLRCVDYNVLFANQPSNHTRPGPFHSKVTLSDAILPSAQCAERIR. Residues 277–297 traverse the membrane as a helical segment; the sequence is SSPLLVLLLVLAAGFWLVQLL. At 298 to 438 the chain is on the cytoplasmic side; it reads RSVCNLFSYW…GALAARWGRT (141 aa). An intramembrane segment occupies 439-459; that stretch reads VLLLAALNLALSPLVLAWQVL. The Cytoplasmic segment spans residues 460–526; the sequence is HVFYSHVELL…AAPPAPLRTL (67 aa). A helical membrane pass occupies residues 527–547; the sequence is LARQLVFFAGALFAALLVLTV. Topologically, residues 548 to 551 are lumenal; that stretch reads YDED. A helical transmembrane segment spans residues 552–572; that stretch reads VLAVEHVLTAMTALGVTATVA. Over 573–624 the chain is Cytoplasmic; sequence RSFIPEEQCQGRAPQLLLQTALAHMHYLPEEPGPGGRDRAYRQMAQLLQYRA. An intramembrane segment occupies 625 to 645; that stretch reads VSLLEELLSPLLTPLFLLFWF. Over 646–924 the chain is Cytoplasmic; that stretch reads RPRALEIIDF…KEPDRASCTD (279 aa). The segment at 847 to 924 is disordered; it reads QQEPWGEAAA…KEPDRASCTD (78 aa). Residues 878–890 are compositionally biased toward low complexity; that stretch reads SWSSDGSSPASSP. Residues 913–924 show a composition bias toward basic and acidic residues; sequence TQKEPDRASCTD.

Belongs to the ATG9 family. As to quaternary structure, homotrimer; forms a homotrimer with a central pore that forms a path between the two membrane leaflets. Highly expressed in placenta (trophoblast cells) and pituitary gland. Not expressed in vascular endothelial.

The protein localises to the preautophagosomal structure membrane. It catalyses the reaction a 1,2-diacyl-sn-glycero-3-phosphocholine(in) = a 1,2-diacyl-sn-glycero-3-phosphocholine(out). It carries out the reaction a 1,2-diacyl-sn-glycero-3-phospho-L-serine(in) = a 1,2-diacyl-sn-glycero-3-phospho-L-serine(out). The enzyme catalyses a 1,2-diacyl-sn-glycero-3-phosphoethanolamine(in) = a 1,2-diacyl-sn-glycero-3-phosphoethanolamine(out). In terms of biological role, phospholipid scramblase involved in autophagy by mediating autophagosomal membrane expansion. Cycles between the preautophagosomal structure/phagophore assembly site (PAS) and the cytoplasmic vesicle pool and supplies membrane for the growing autophagosome. Lipid scramblase activity plays a key role in preautophagosomal structure/phagophore assembly by distributing the phospholipids that arrive through ATG2 (ATG2A or ATG2B) from the cytoplasmic to the luminal leaflet of the bilayer, thereby driving autophagosomal membrane expansion. In addition to autophagy, also plays a role in necrotic cell death. The polypeptide is Autophagy-related protein 9B (ATG9B) (Homo sapiens (Human)).